We begin with the raw amino-acid sequence, 197 residues long: MSNIVWHAHAVDKQSRAEQKGQKPLVIWFTGLSGAGKSTLAGALEQALAASGKHTYLLDGDNVRHGLCGDLGFDDAARQENIRRVGEVAKLMVDAGLIVLTAFISPFRAERELVRNLVGEGEFVEVFVDAPLSVCEERDPKGLYKKARAGEIRNFTGIDSAYEAPEQPEIHLLNAGKPVAALVDELLTALRLRVLID.

31-38 (GLSGAGKS) serves as a coordination point for ATP. The active-site Phosphoserine intermediate is Ser-105.

Belongs to the APS kinase family.

The catalysed reaction is adenosine 5'-phosphosulfate + ATP = 3'-phosphoadenylyl sulfate + ADP + H(+). The protein operates within sulfur metabolism; hydrogen sulfide biosynthesis; sulfite from sulfate: step 2/3. Functionally, catalyzes the synthesis of activated sulfate. This chain is Adenylyl-sulfate kinase, found in Aeromonas hydrophila subsp. hydrophila (strain ATCC 7966 / DSM 30187 / BCRC 13018 / CCUG 14551 / JCM 1027 / KCTC 2358 / NCIMB 9240 / NCTC 8049).